The chain runs to 150 residues: MLGAALRRCAVAATTRAGPRGLLHSARTPGPAAAIQSVRCYSHGSQETDEEFDARWVTYFNKPDIDAWELRKGINTLVTYDMVPEPKIIDAALRACRRLNEFASTVRILEAVKDKAGPHKEIYPYVIQELRPTLNELGISTPEELGLDKV.

Residues 1 to 41 (MLGAALRRCAVAATTRAGPRGLLHSARTPGPAAAIQSVRCY) constitute a mitochondrion transit peptide. Residues 2-17 (LGAALRRCAVAATTRA) carry the SIFI-degron motif. N6-acetyllysine is present on residues Lys-87 and Lys-113. Thr-141 carries the post-translational modification Phosphothreonine.

It belongs to the cytochrome c oxidase subunit 5A family. In terms of assembly, component of the cytochrome c oxidase (complex IV, CIV), a multisubunit enzyme composed of 14 subunits. The complex is composed of a catalytic core of 3 subunits MT-CO1, MT-CO2 and MT-CO3, encoded in the mitochondrial DNA, and 11 supernumerary subunits COX4I, COX5A, COX5B, COX6A, COX6B, COX6C, COX7A, COX7B, COX7C, COX8 and NDUFA4, which are encoded in the nuclear genome. The complex exists as a monomer or a dimer and forms supercomplexes (SCs) in the inner mitochondrial membrane with NADH-ubiquinone oxidoreductase (complex I, CI) and ubiquinol-cytochrome c oxidoreductase (cytochrome b-c1 complex, complex III, CIII), resulting in different assemblies (supercomplex SCI(1)III(2)IV(1) and megacomplex MCI(2)III(2)IV(2)). Interacts with AFG1L. Interacts with RAB5IF. In terms of processing, in response to mitochondrial stress, the precursor protein is ubiquitinated by the SIFI complex in the cytoplasm before mitochondrial import, leading to its degradation. Within the SIFI complex, UBR4 initiates ubiquitin chain that are further elongated or branched by KCMF1.

It is found in the mitochondrion inner membrane. It participates in energy metabolism; oxidative phosphorylation. Functionally, component of the cytochrome c oxidase, the last enzyme in the mitochondrial electron transport chain which drives oxidative phosphorylation. The respiratory chain contains 3 multisubunit complexes succinate dehydrogenase (complex II, CII), ubiquinol-cytochrome c oxidoreductase (cytochrome b-c1 complex, complex III, CIII) and cytochrome c oxidase (complex IV, CIV), that cooperate to transfer electrons derived from NADH and succinate to molecular oxygen, creating an electrochemical gradient over the inner membrane that drives transmembrane transport and the ATP synthase. Cytochrome c oxidase is the component of the respiratory chain that catalyzes the reduction of oxygen to water. Electrons originating from reduced cytochrome c in the intermembrane space (IMS) are transferred via the dinuclear copper A center (CU(A)) of subunit 2 and heme A of subunit 1 to the active site in subunit 1, a binuclear center (BNC) formed by heme A3 and copper B (CU(B)). The BNC reduces molecular oxygen to 2 water molecules using 4 electrons from cytochrome c in the IMS and 4 protons from the mitochondrial matrix. The sequence is that of Cytochrome c oxidase subunit 5A, mitochondrial (COX5A) from Gorilla gorilla gorilla (Western lowland gorilla).